The chain runs to 121 residues: Basic phospholipase A2 3 (121 aa).

Cystine bridges form between cysteine 26–cysteine 115, cysteine 28–cysteine 44, cysteine 43–cysteine 95, cysteine 49–cysteine 121, cysteine 50–cysteine 88, cysteine 57–cysteine 81, and cysteine 75–cysteine 86. Ca(2+) is bound by residues tyrosine 27, glycine 29, and glycine 31. Histidine 47 is a catalytic residue. Residue aspartate 48 coordinates Ca(2+). Aspartate 89 is an active-site residue.

It belongs to the phospholipase A2 family. Group II subfamily. D49 sub-subfamily. It depends on Ca(2+) as a cofactor. Expressed by the venom gland.

Its subcellular location is the secreted. It carries out the reaction a 1,2-diacyl-sn-glycero-3-phosphocholine + H2O = a 1-acyl-sn-glycero-3-phosphocholine + a fatty acid + H(+). PLA2 catalyzes the calcium-dependent hydrolysis of the 2-acyl groups in 3-sn-phosphoglycerides. In Daboia russelii (Russel's viper), this protein is Basic phospholipase A2 3.